Here is a 369-residue protein sequence, read N- to C-terminus: Transaldolase (369 aa).

The active-site Schiff-base intermediate with substrate is the Lys-140.

Belongs to the transaldolase family. Type 2 subfamily.

It localises to the cytoplasm. The catalysed reaction is D-sedoheptulose 7-phosphate + D-glyceraldehyde 3-phosphate = D-erythrose 4-phosphate + beta-D-fructose 6-phosphate. It functions in the pathway carbohydrate degradation; pentose phosphate pathway; D-glyceraldehyde 3-phosphate and beta-D-fructose 6-phosphate from D-ribose 5-phosphate and D-xylulose 5-phosphate (non-oxidative stage): step 2/3. Its function is as follows. Transaldolase is important for the balance of metabolites in the pentose-phosphate pathway. This chain is Transaldolase, found in Parafrankia sp. (strain EAN1pec).